A 106-amino-acid chain; its full sequence is Small ribosomal subunit protein uS10 (106 aa).

The protein belongs to the universal ribosomal protein uS10 family. In terms of assembly, part of the 30S ribosomal subunit.

In terms of biological role, involved in the binding of tRNA to the ribosomes. The polypeptide is Small ribosomal subunit protein uS10 (Pyrobaculum aerophilum (strain ATCC 51768 / DSM 7523 / JCM 9630 / CIP 104966 / NBRC 100827 / IM2)).